The following is a 233-amino-acid chain: tRNA (guanine-N(7)-)-methyltransferase (233 aa).

S-adenosyl-L-methionine contacts are provided by Glu-62, Glu-87, Asp-116, and Asp-138. Asp-138 is an active-site residue. Substrate-binding positions include Lys-142, Asp-174, and 212-215; that span reads TRYE.

It belongs to the class I-like SAM-binding methyltransferase superfamily. TrmB family.

It catalyses the reaction guanosine(46) in tRNA + S-adenosyl-L-methionine = N(7)-methylguanosine(46) in tRNA + S-adenosyl-L-homocysteine. It functions in the pathway tRNA modification; N(7)-methylguanine-tRNA biosynthesis. Catalyzes the formation of N(7)-methylguanine at position 46 (m7G46) in tRNA. The sequence is that of tRNA (guanine-N(7)-)-methyltransferase from Bartonella henselae (strain ATCC 49882 / DSM 28221 / CCUG 30454 / Houston 1) (Rochalimaea henselae).